A 264-amino-acid chain; its full sequence is MDARVFQSYSARAEGMKNPIAKELLALMEEKQSNLSVAVDLTKKSEILELVDKIGPYVCVIKTHIDVVEDFDQDMVEKLVALGKKHRFLIFEDRKFADIGNTVKLQYASGVYKIASWAHITNCHTVPGEGIIQGLKEVGLPLGRGLLLLAEMSSKGSLATGSYTEKTLEWFEKHTDFCFGFIAGRRFPNLQSDYITMSPGIGLDVKGDGLGQQYRTPEEVIVNCGSDIIIVGRGVYGAGRNPVVEAKRYREAGWKAYQQRLSQH.

Substrate-binding positions include Asp40, 62–64, 93–102, Tyr214, and Arg233; these read KTH and DRKFADIGNT. Lys95 acts as the Proton donor in catalysis.

The protein belongs to the OMP decarboxylase family.

The enzyme catalyses orotidine 5'-phosphate + H(+) = UMP + CO2. It functions in the pathway pyrimidine metabolism; UMP biosynthesis via de novo pathway; UMP from orotate: step 2/2. This is Orotidine 5'-phosphate decarboxylase (ura4) from Schizosaccharomyces pombe (strain 972 / ATCC 24843) (Fission yeast).